The sequence spans 365 residues: Chorismate synthase (365 aa).

Positions 48 and 54 each coordinate NADP(+). Residues 125–127, 238–239, G278, 293–297, and R319 contribute to the FMN site; these read RSS, NA, and KPTSS.

The protein belongs to the chorismate synthase family. As to quaternary structure, homotetramer. The cofactor is FMNH2.

The enzyme catalyses 5-O-(1-carboxyvinyl)-3-phosphoshikimate = chorismate + phosphate. The protein operates within metabolic intermediate biosynthesis; chorismate biosynthesis; chorismate from D-erythrose 4-phosphate and phosphoenolpyruvate: step 7/7. In terms of biological role, catalyzes the anti-1,4-elimination of the C-3 phosphate and the C-6 proR hydrogen from 5-enolpyruvylshikimate-3-phosphate (EPSP) to yield chorismate, which is the branch point compound that serves as the starting substrate for the three terminal pathways of aromatic amino acid biosynthesis. This reaction introduces a second double bond into the aromatic ring system. This is Chorismate synthase from Alteromonas mediterranea (strain DSM 17117 / CIP 110805 / LMG 28347 / Deep ecotype).